Consider the following 150-residue polypeptide: Ribonuclease H (150 aa).

The RNase H type-1 domain occupies 3-144; the sequence is GEDIVEIYTD…ADALARQGMA (142 aa). Residues Asp-12, Glu-50, Asp-72, and Asp-136 each contribute to the Mg(2+) site.

The protein belongs to the RNase H family. In terms of assembly, monomer. Mg(2+) is required as a cofactor.

The protein resides in the cytoplasm. It carries out the reaction Endonucleolytic cleavage to 5'-phosphomonoester.. Its function is as follows. Endonuclease that specifically degrades the RNA of RNA-DNA hybrids. The chain is Ribonuclease H from Parvibaculum lavamentivorans (strain DS-1 / DSM 13023 / NCIMB 13966).